Here is a 403-residue protein sequence, read N- to C-terminus: MSKFNRIHLVVLDSVGIGAAPDADKFFNAGVADTDSDTLGHISETAGLSVPNMVKIGLGNISRPIPLKTVPTEDNPTGYVTKLEEVSLGKDTMTGHWEIMGLNITEPFDTFWNGFPEEILTKIEEFSGRKIIREANKPYSGTAVIDDFGPRQMETGELIVYTSADPVLQIAAHEDIIPVEELYKICEYARSITLERPALLGRIIARPYVGEPGNFTRTANRHDYAVSPFQDTVLNKLADAGVPTYAVGKINDIFNGSGITNDMGHNKSNSHGIDTLIKTLQLPEFTKGFSFTNLVDFDANFGHRRDSEGYRDCLHEFDNRLPEIIANMKEDDLLLITADHGNDPTYAGTDHTREYIPLLAYSASFTGNGLIPQGHFADISATVAENFGVDTAMIGESFLGHLK.

6 residues coordinate Mn(2+): aspartate 13, aspartate 298, histidine 303, aspartate 339, histidine 340, and histidine 351.

The protein belongs to the phosphopentomutase family. The cofactor is Mn(2+).

It is found in the cytoplasm. It carries out the reaction 2-deoxy-alpha-D-ribose 1-phosphate = 2-deoxy-D-ribose 5-phosphate. The catalysed reaction is alpha-D-ribose 1-phosphate = D-ribose 5-phosphate. It participates in carbohydrate degradation; 2-deoxy-D-ribose 1-phosphate degradation; D-glyceraldehyde 3-phosphate and acetaldehyde from 2-deoxy-alpha-D-ribose 1-phosphate: step 1/2. Its function is as follows. Isomerase that catalyzes the conversion of deoxy-ribose 1-phosphate (dRib-1-P) and ribose 1-phosphate (Rib-1-P) to deoxy-ribose 5-phosphate (dRib-5-P) and ribose 5-phosphate (Rib-5-P), respectively. The chain is Phosphopentomutase from Streptococcus pyogenes serotype M5 (strain Manfredo).